We begin with the raw amino-acid sequence, 112 residues long: Large ribosomal subunit protein mL53 (112 aa).

Belongs to the mitochondrion-specific ribosomal protein mL53 family. In terms of assembly, component of the mitochondrial ribosome large subunit (39S) which comprises a 16S rRNA and about 50 distinct proteins.

The protein localises to the mitochondrion. This chain is Large ribosomal subunit protein mL53 (MRPL53), found in Bos taurus (Bovine).